A 330-amino-acid chain; its full sequence is tRNA-modifying protein YgfZ (330 aa).

2 residues coordinate folate: Trp-28 and Trp-190.

It belongs to the tRNA-modifying YgfZ family.

The protein resides in the cytoplasm. Its function is as follows. Folate-binding protein involved in regulating the level of ATP-DnaA and in the modification of some tRNAs. It is probably a key factor in regulatory networks that act via tRNA modification, such as initiation of chromosomal replication. The chain is tRNA-modifying protein YgfZ from Serratia proteamaculans (strain 568).